The primary structure comprises 510 residues: MVLLSDVVRTSAEVSATRSRKSKVAAIAGLLSRLGEAEVGPGTAFLAGELRGGRAGVGWATLSALDPAAAGEPSLTVAEVDAAIDALREIGGAGSGQRRAELLADLLARATAAEQEFLVRLLGGELRQGALEGVMLEAIAAAAGVRPDAVRRAFMLSGRLPATAEAALRGGEEELGGFRLEVGRPLRPMLASPAETLDEAMTELGEVSVEYKMDGARIQVHRDGDDVHIYTRTLREITRHVPELVELVRGLDCRSIVLDGETLALDDSGRPRPFQETMGRFGAQSPRDLLLHPYFFDCLHLDGRDLLDLPLRDRLTALEEVAADHRIPAVLTADAEHASGIFDDALEAGHEGVMVKSLDSAYAAGRRGRTWRKVKPSHTLDLVVLAAEWGHGRRSGYLSNLHLGARDPDGGPPIMVGKTFKGLTDELLAWQTEEFQRRETHRDDWTVHLVPELVVEIELDGVQTSTRYPGGVALRFARVLRYRPDKDAASADTIDAVREVRGPQRAAEGG.

ATP is bound at residue Glu210. The N6-AMP-lysine intermediate role is filled by Lys212. 6 residues coordinate ATP: Arg217, Arg232, Glu261, Phe296, Arg367, and Lys373.

This sequence belongs to the ATP-dependent DNA ligase family. It depends on Mg(2+) as a cofactor.

It catalyses the reaction ATP + (deoxyribonucleotide)n-3'-hydroxyl + 5'-phospho-(deoxyribonucleotide)m = (deoxyribonucleotide)n+m + AMP + diphosphate.. DNA ligase that seals nicks in double-stranded DNA during DNA replication, DNA recombination and DNA repair. This Saccharopolyspora erythraea (strain ATCC 11635 / DSM 40517 / JCM 4748 / NBRC 13426 / NCIMB 8594 / NRRL 2338) protein is Probable DNA ligase.